Here is a 1311-residue protein sequence, read N- to C-terminus: Suppressor of presenilin protein 4 (1311 aa).

Residues 1-11 (MSSEPTSSIES) show a composition bias toward polar residues. Disordered regions lie at residues 1-58 (MSSE…DDLN) and 75-95 (MFED…STAH). 2 C2H2-type zinc fingers span residues 112-134 (HACH…TKMH) and 141-163 (FACE…NNIH). The segment at 226 to 304 (EFDTTPPPIL…PPPVRKDVEK (79 aa)) is disordered. Residues 280–293 (SPKGSLPSSSASSV) are compositionally biased toward low complexity. 4 consecutive C2H2-type zinc fingers follow at residues 327 to 349 (QRCP…SGGH), 355 to 379 (YICP…YILH), 451 to 476 (KKCN…VKTH), and 487 to 510 (FLCL…LIEH). The tract at residues 544–563 (VKEEPKEADGDESGDESFDS) is disordered. Residues 552–561 (DGDESGDESF) show a composition bias toward acidic residues. C2H2-type zinc fingers lie at residues 585-607 (FCCN…YDKH), 613-635 (FKCQ…EKLH), 709-731 (FQCT…KKRH), 737-759 (YRCV…LKQH), 794-816 (YCCD…HRNH), and 823-845 (NICS…TIIH). The disordered stretch occupies residues 865–1002 (RPVSSLTDLN…ESPEPDESVE (138 aa)). Positions 874–897 (NSEKMNERKSTKRKMLDKVEKMEV) are enriched in basic and acidic residues. Residues 898 to 907 (GEDEEDDEES) are compositionally biased toward acidic residues. Basic and acidic residues predominate over residues 908–920 (VDKGTDDGDYKQR). Over residues 956-979 (NRINYSLLSKNGSGKPTPSTSSAN) the composition is skewed to polar residues. 6 C2H2-type zinc fingers span residues 1022-1044 (LKCP…RYYH), 1053-1075 (YACS…LKLH), 1104-1126 (YYCK…SAYH), 1162-1184 (KYCK…LDRH), 1190-1212 (YKCY…QLNH), and 1261-1284 (LKCP…SVHH).

Expressed in neurons.

Its subcellular location is the nucleus. Probable transcriptional regulator, which participates in the transcriptional repression of the presenilin protein hop-1. Might play a role in the oxidative stress response. The protein is Suppressor of presenilin protein 4 (spr-4) of Caenorhabditis elegans.